An 85-amino-acid chain; its full sequence is Large ribosomal subunit protein bL31B (85 aa).

The protein belongs to the bacterial ribosomal protein bL31 family. Type B subfamily. Part of the 50S ribosomal subunit.

The protein is Large ribosomal subunit protein bL31B of Aliivibrio salmonicida (strain LFI1238) (Vibrio salmonicida (strain LFI1238)).